Here is a 417-residue protein sequence, read N- to C-terminus: NADH-quinone oxidoreductase subunit D (417 aa).

The protein belongs to the complex I 49 kDa subunit family. As to quaternary structure, NDH-1 is composed of 14 different subunits. Subunits NuoB, C, D, E, F, and G constitute the peripheral sector of the complex.

The protein localises to the cell inner membrane. It catalyses the reaction a quinone + NADH + 5 H(+)(in) = a quinol + NAD(+) + 4 H(+)(out). In terms of biological role, NDH-1 shuttles electrons from NADH, via FMN and iron-sulfur (Fe-S) centers, to quinones in the respiratory chain. The immediate electron acceptor for the enzyme in this species is believed to be ubiquinone. Couples the redox reaction to proton translocation (for every two electrons transferred, four hydrogen ions are translocated across the cytoplasmic membrane), and thus conserves the redox energy in a proton gradient. This Dechloromonas aromatica (strain RCB) protein is NADH-quinone oxidoreductase subunit D.